The sequence spans 115 residues: Virion-associated protein (115 aa).

2 coiled-coil regions span residues 1–28 and 33–54; these read MAAT…MLER and KPTG…KIDQ. Residues 96–106 show a composition bias toward polar residues; the sequence is GNEELGSSGNP. The segment at 96-115 is disordered; it reads GNEELGSSGNPNAVKWPPRK.

The protein belongs to the caulimovirus ORF III family. As to quaternary structure, homotetramer, through coiled-coil domain. Homotrimer when interacts with icosehadral capsid. Interacts with capsid protein, and with Movement protein.

It localises to the virion. The protein localises to the host cell junction. The protein resides in the host plasmodesma. Functionally, plays a role in virus cell-to-cell and plant-to-plant transmission. Interacts with virion icosahedral capsid and movement protein, thereby facilitating virion cell-to-cell transmission through plasmodesmata opened by viral movement protein. Also interacts with aphid transmission factor, attaching the virion to aphid stylet when the animal feeds on an virus infected plant. Aphid saliva may later detach the virion, inducing release of infectious particles when the animal feeds on a new plant. This is Virion-associated protein from Scrophularia californica (California bee plant).